The chain runs to 448 residues: UDP-N-acetylmuramoyl-L-alanine--L-glutamate ligase (448 aa).

118–124 (GSKGKST) contributes to the ATP binding site.

The protein belongs to the MurCDEF family. MurD2 subfamily.

The protein resides in the cytoplasm. The enzyme catalyses UDP-N-acetyl-alpha-D-muramoyl-L-alanine + L-glutamate + ATP = UDP-N-acetyl-alpha-D-muramoyl-L-alanyl-L-glutamate + ADP + phosphate + H(+). It functions in the pathway cell wall biogenesis; peptidoglycan biosynthesis. Cell wall formation. Catalyzes the addition of L-glutamate to the nucleotide precursor UDP-N-acetylmuramoyl-L-alanine. This chain is UDP-N-acetylmuramoyl-L-alanine--L-glutamate ligase, found in Salinispora tropica (strain ATCC BAA-916 / DSM 44818 / JCM 13857 / NBRC 105044 / CNB-440).